We begin with the raw amino-acid sequence, 1411 residues long: DNA-directed RNA polymerase subunit beta' (1411 aa).

Zn(2+) is bound by residues cysteine 70, cysteine 72, cysteine 85, and cysteine 88. Aspartate 458, aspartate 460, and aspartate 462 together coordinate Mg(2+). Zn(2+) contacts are provided by cysteine 813, cysteine 887, cysteine 894, and cysteine 897. The disordered stretch occupies residues 1384–1411 (AEAAEMATTGSDEAPEVEGSGVESGSAE).

Belongs to the RNA polymerase beta' chain family. In terms of assembly, the RNAP catalytic core consists of 2 alpha, 1 beta, 1 beta' and 1 omega subunit. When a sigma factor is associated with the core the holoenzyme is formed, which can initiate transcription. Mg(2+) serves as cofactor. The cofactor is Zn(2+).

It catalyses the reaction RNA(n) + a ribonucleoside 5'-triphosphate = RNA(n+1) + diphosphate. Its function is as follows. DNA-dependent RNA polymerase catalyzes the transcription of DNA into RNA using the four ribonucleoside triphosphates as substrates. The chain is DNA-directed RNA polymerase subunit beta' from Paracidovorax citrulli (strain AAC00-1) (Acidovorax citrulli).